Consider the following 174-residue polypeptide: uncharacterized protein (174 aa).

The protein belongs to the archaeal NMN adenylyltransferase family.

This is an uncharacterized protein from Archaeoglobus fulgidus (strain ATCC 49558 / DSM 4304 / JCM 9628 / NBRC 100126 / VC-16).